A 73-amino-acid chain; its full sequence is MKAGIHPEYKAVNATCSCGNSFEFNSTLGKESIHLDVCDKCHPFYTGKQRIVDTGGRVDRFNKRFGALSSGKK.

Residues Cys16, Cys18, Cys38, and Cys41 each contribute to the Zn(2+) site.

The protein belongs to the bacterial ribosomal protein bL31 family. Type A subfamily. In terms of assembly, part of the 50S ribosomal subunit. Zn(2+) is required as a cofactor.

Binds the 23S rRNA. The protein is Large ribosomal subunit protein bL31 of Vibrio parahaemolyticus serotype O3:K6 (strain RIMD 2210633).